We begin with the raw amino-acid sequence, 345 residues long: D-amino-acid oxidase (345 aa).

Residues Ser-10, Ile-13, Ser-49, Gly-53, and Asn-55 each coordinate FAD. (R)-lactate contacts are provided by Tyr-230 and Arg-290. Residues Tyr-230 and Arg-290 each coordinate anthranilate. 5 residues coordinate FAD: Arg-290, Ser-317, Gly-320, Tyr-321, and Gln-322. The Microbody targeting signal signature appears at 343–345; it reads AKL.

Belongs to the DAMOX/DASOX family. It depends on FAD as a cofactor.

It is found in the peroxisome matrix. The catalysed reaction is a D-alpha-amino acid + O2 + H2O = a 2-oxocarboxylate + H2O2 + NH4(+). It carries out the reaction D-methionine + O2 + H2O = 4-methylsulfanyl-2-oxobutanoate + H2O2 + NH4(+). Functionally, catalyzes the oxidative deamination of D-amino acids with broad substrate specificity. Enables the organism to utilize D-amino acids as a source of nutrients. Enables the organism to utilize D-alanine as a nitrogen source, although it is not strictly required for this process. Also enables utilization of D-alanine as a carbon source. The chain is D-amino-acid oxidase from Candida boidinii (Yeast).